Consider the following 331-residue polypeptide: Glycerophosphodiester phosphodiesterase 1 (331 aa).

The Cytoplasmic portion of the chain corresponds to 1–3 (MWL). The helical transmembrane segment at 4–24 (WEDQGGLLGPFSFVLVLLLVV) threads the bilayer. The Lumenal portion of the chain corresponds to 25-248 (TRSPFNACVL…PRYSVFWKQS (224 aa)). A GP-PDE domain is found at 65 to 331 (VSAIAHRGGS…SMLEDCAPHF (267 aa)). 2 residues coordinate Mg(2+): E97 and D99. An N-linked (GlcNAc...) asparagine glycan is attached at N168. Mg(2+) is bound at residue D174. The helical transmembrane segment at 249–269 (VFVVLDILLDWSMHNVLWYLC) threads the bilayer. Topologically, residues 270–331 (GISAFLMQKD…SMLEDCAPHF (62 aa)) are cytoplasmic.

It belongs to the glycerophosphoryl diester phosphodiesterase family. As to quaternary structure, interacts with PRAF2. Interacts with RGS16. The cofactor is Mg(2+). N-glycosylated. Widely expressed. Highly expressed in the brain and spinal cord, followed by kidney, liver, and testis. In contrast, little or no expression is detected in the heart or spleen.

Its subcellular location is the cell membrane. The protein resides in the cytoplasmic vesicle membrane. It carries out the reaction sn-glycero-3-phospho-1D-myo-inositol + H2O = myo-inositol + sn-glycerol 3-phosphate + H(+). It catalyses the reaction 1-O-(1Z-octadecenyl)-sn-glycero-3-phospho-(N-5Z,8Z,11Z,14Z-eicosatetraenoyl)-ethanolamine + H2O = 1-O-(1Z-octadecenyl)-sn-glycero-3-phosphate + N-(5Z,8Z,11Z,14Z-eicosatetraenoyl)-ethanolamine + H(+). The enzyme catalyses 1-O-(1Z-octadecenyl)-sn-glycero-3-phospho-(N-9Z-octadecenoyl)-ethanolamine + H2O = 1-O-(1Z-octadecenyl)-sn-glycero-3-phosphate + N-(9Z-octadecenoyl) ethanolamine + H(+). The catalysed reaction is 1-O-(1Z-octadecenyl)-sn-glycero-3-phospho-N-hexadecanoyl-ethanolamine + H2O = 1-O-(1Z-octadecenyl)-sn-glycero-3-phosphate + N-hexadecanoylethanolamine + H(+). It carries out the reaction N-(4Z,7Z,10Z,13Z,16Z,19Z)-docosahexaenoyl-sn-glycero-3-phosphoethanolamine + H2O = N-(4Z,7Z,10Z,13Z,16Z,19Z)-docosahexaenoyl ethanolamine + sn-glycerol 3-phosphate + H(+). It catalyses the reaction N-eicosanoyl-sn-glycero-3-phosphoethanolamine + H2O = N-eicosanoyl ethanolamine + sn-glycerol 3-phosphate + H(+). The enzyme catalyses N-hexadecanoyl-sn-glycero-3-phosphoethanolamine + H2O = N-hexadecanoylethanolamine + sn-glycerol 3-phosphate + H(+). The catalysed reaction is N-(9Z-octadecenoyl)-sn-glycero-3-phosphoethanolamine + H2O = N-(9Z-octadecenoyl) ethanolamine + sn-glycerol 3-phosphate + H(+). It carries out the reaction N-(5Z,8Z,11Z,14Z-eicosatetraenoyl)-sn-glycero-3-phosphoethanolamine + H2O = N-(5Z,8Z,11Z,14Z-eicosatetraenoyl)-ethanolamine + sn-glycerol 3-phosphate + H(+). Its activity is regulated as follows. Inhibited by EDTA, calcium chloride, and zinc chloride. Enhanced by magnesium chloride. Glycerophosphodiester phosphodiesterase activity can be modulated by G-protein signaling pathways. Hydrolyzes the phosphodiester bond of glycerophosphodiesters such as glycerophosphoinositol (GroPIns) and glycerophosphoethanolamine (GroPEth), to yield a glycerol phosphate and an alcohol. Hydrolyzes glycerophospho-N-acylethanolamines to N-acylethanolamines in the brain and participates in bioactive N-acylethanolamine biosynthesis such as anandamide (an endocannabinoid), N-palmitoylethanolamine (an anti-inflammatory), and N-oleoylethanolamine (an anorexic). In addition, has a lysophospholipase D activity by hydrolyzing N-acyl-lysoplasmenylethanolamine (N-acyl-lysoPlsEt) to N-acylethanolamine. However lysophospholipase D activity is lower than glycerophosphodiester phosphodiesterase activity. Has little or no activity towards glycerophosphocholine. The protein is Glycerophosphodiester phosphodiesterase 1 of Mus musculus (Mouse).